We begin with the raw amino-acid sequence, 569 residues long: Urease subunit beta (569 aa).

The Urease domain occupies 131–569; that stretch reads GGIDTHIHFI…VSLAQLFSIF (439 aa). Residues H136, H138, and K219 each contribute to the Ni(2+) site. K219 is modified (N6-carboxylysine). H221 provides a ligand contact to substrate. Residues H248 and H274 each coordinate Ni(2+). Catalysis depends on H322, which acts as the Proton donor. D362 serves as a coordination point for Ni(2+).

The protein belongs to the metallo-dependent hydrolases superfamily. Urease alpha subunit family. Heterohexamer of 3 UreA (alpha) and 3 UreB (beta) subunits. Ni cation is required as a cofactor. In terms of processing, carboxylation allows a single lysine to coordinate two nickel ions.

It is found in the cytoplasm. The catalysed reaction is urea + 2 H2O + H(+) = hydrogencarbonate + 2 NH4(+). Its pathway is nitrogen metabolism; urea degradation; CO(2) and NH(3) from urea (urease route): step 1/1. This is Urease subunit beta from Helicobacter pylori (strain HPAG1).